We begin with the raw amino-acid sequence, 423 residues long: Histidine--tRNA ligase (423 aa).

This sequence belongs to the class-II aminoacyl-tRNA synthetase family. Homodimer.

It is found in the cytoplasm. The enzyme catalyses tRNA(His) + L-histidine + ATP = L-histidyl-tRNA(His) + AMP + diphosphate + H(+). This chain is Histidine--tRNA ligase, found in Corynebacterium diphtheriae (strain ATCC 700971 / NCTC 13129 / Biotype gravis).